The sequence spans 614 residues: Nuclear receptor subfamily 1 group D member 1 (614 aa).

Residues 1-48 (MTTLDSNNNTGGVITYIGSSGSSPNRTSPESLYSDSSNGSFQSLTQGC) show a composition bias toward polar residues. The interval 1–70 (MTTLDSNNNT…TQDPARSFGS (70 aa)) is required for phosphorylation by CSNK1E and cytoplasmic localization. The segment at 1–120 (MTTLDSNNNT…GNRVSPSKST (120 aa)) is disordered. The interval 1–129 (MTTLDSNNNT…TSNITKLNGM (129 aa)) is modulating. The tract at residues 49-285 (PTYFPPSPTG…PPRSPSPEPT (237 aa)) is crucial for activation of GJA1. Phosphoserine; by GSK3-beta occurs at positions 55 and 59. Residues 69–103 (GSIPPSLGDDGSPSSSSSSSSSSSSSFYNGSPPGG) show a composition bias toward low complexity. The segment at residues 130–206 (VLLCKVCGDV…VGMSRDAVRF (77 aa)) is a DNA-binding region (nuclear receptor). 2 consecutive NR C4-type zinc fingers follow at residues 133–153 (CKVCGDVASGFHYGVHACEGC) and 170–194 (CLKNENCSIVRINRNRCQQCRFKKC). Lys192 and Lys193 each carry N6-acetyllysine; by KAT5. Positions 233–286 (SSQCPLETPPTQHPTPGPMGPSPPPAPAPSPLVGFSQFPQQLTPPRSPSPEPTV) are disordered. A compositionally biased stretch (pro residues) spans 239 to 262 (ETPPTQHPTPGPMGPSPPPAPAPS). At Thr275 the chain carries Phosphothreonine; by CDK1. In terms of domain architecture, NR LBD spans 285–614 (TVEDVISQVA…KLLSFRVDAQ (330 aa)). Cys418 is a heme binding site. Lys591 is modified (N6-acetyllysine). His602 contributes to the heme binding site.

This sequence belongs to the nuclear hormone receptor family. NR1 subfamily. Binds DNA as a monomer or a homodimer. Interacts with C1D, NR2E3, SP1 and ZNHIT1. Interacts with OPHN1 (via C-terminus). Interacts with PER2; the interaction associates PER2 to BMAL1 promoter region. Interacts with CRY1. Interacts with CCAR2. Interacts with SIAH2. Interacts with FBXW7 and CDK1. Interacts with HUWE1. Interacts with NR0B2. Interacts with NFIL3. Interacts (via domain NR LBD) with HSP90AA1 and HSP90AB1. In terms of processing, ubiquitinated, leading to its proteasomal degradation. Ubiquitinated by the SCF(FBXW7) complex when phosphorylated by CDK1 leading to its proteasomal degradation. Ubiquitinated by SIAH2; leading to its proteasomal degradation. Rapidly ubiquitinated in response to inflammatory triggers and sumoylation is a prerequisite to its ubiquitination. Sumoylated by UBE2I, desumoylated by SENP1, and sumoylation is a prerequisite to its ubiquitination. Post-translationally, phosphorylated by CSNK1E; phosphorylation enhances its cytoplasmic localization. In terms of processing, undergoes lysosome-mediated degradation in a time-dependent manner in the liver. Expressed in all tissues and cell lines examined. Expressed at high levels in some squamous carcinoma cell lines.

Its subcellular location is the nucleus. The protein localises to the cytoplasm. It localises to the cell projection. It is found in the dendrite. The protein resides in the dendritic spine. Transcriptional repressor which coordinates circadian rhythm and metabolic pathways in a heme-dependent manner. Integral component of the complex transcription machinery that governs circadian rhythmicity and forms a critical negative limb of the circadian clock by directly repressing the expression of core clock components BMAL1, CLOCK and CRY1. Also regulates genes involved in metabolic functions, including lipid and bile acid metabolism, adipogenesis, gluconeogenesis and the macrophage inflammatory response. Acts as a receptor for heme which stimulates its interaction with the NCOR1/HDAC3 corepressor complex, enhancing transcriptional repression. Recognizes two classes of DNA response elements within the promoter of its target genes and can bind to DNA as either monomers or homodimers, depending on the nature of the response element. Binds as a monomer to a response element composed of the consensus half-site motif 5'-[A/G]GGTCA-3' preceded by an A/T-rich 5' sequence (RevRE), or as a homodimer to a direct repeat of the core motif spaced by two nucleotides (RevDR-2). Acts as a potent competitive repressor of ROR alpha (RORA) function and regulates the levels of its ligand heme by repressing the expression of PPARGC1A, a potent inducer of heme synthesis. Regulates lipid metabolism by repressing the expression of APOC3 and by influencing the activity of sterol response element binding proteins (SREBPs); represses INSIG2 which interferes with the proteolytic activation of SREBPs which in turn govern the rhythmic expression of enzymes with key functions in sterol and fatty acid synthesis. Regulates gluconeogenesis via repression of G6PC1 and PEPCK and adipocyte differentiation via repression of PPARG. Regulates glucagon release in pancreatic alpha-cells via the AMPK-NAMPT-SIRT1 pathway and the proliferation, glucose-induced insulin secretion and expression of key lipogenic genes in pancreatic-beta cells. Positively regulates bile acid synthesis by increasing hepatic expression of CYP7A1 via repression of NR0B2 and NFIL3 which are negative regulators of CYP7A1. Modulates skeletal muscle oxidative capacity by regulating mitochondrial biogenesis and autophagy; controls mitochondrial biogenesis and respiration by interfering with the STK11-PRKAA1/2-SIRT1-PPARGC1A signaling pathway. Represses the expression of SERPINE1/PAI1, an important modulator of cardiovascular disease and the expression of inflammatory cytokines and chemokines in macrophages. Represses gene expression at a distance in macrophages by inhibiting the transcription of enhancer-derived RNAs (eRNAs). Plays a role in the circadian regulation of body temperature and negatively regulates thermogenic transcriptional programs in brown adipose tissue (BAT); imposes a circadian oscillation in BAT activity, increasing body temperature when awake and depressing thermogenesis during sleep. In concert with NR2E3, regulates transcriptional networks critical for photoreceptor development and function. In addition to its activity as a repressor, can also act as a transcriptional activator. In the ovarian granulosa cells acts as a transcriptional activator of STAR which plays a role in steroid biosynthesis. In collaboration with SP1, activates GJA1 transcription in a heme-independent manner. Represses the transcription of CYP2B10, CYP4A10 and CYP4A14. Represses the transcription of CES2. Represses and regulates the circadian expression of TSHB in a NCOR1-dependent manner. Negatively regulates the protein stability of NR3C1 and influences the time-dependent subcellular distribution of NR3C1, thereby affecting its transcriptional regulatory activity. Plays a critical role in the circadian control of neutrophilic inflammation in the lung; under resting, non-stress conditions, acts as a rhythmic repressor to limit inflammatory activity whereas in the presence of inflammatory triggers undergoes ubiquitin-mediated degradation thereby relieving inhibition of the inflammatory response. Plays a key role in the circadian regulation of microglial activation and neuroinflammation; suppresses microglial activation through the NF-kappaB pathway in the central nervous system. Plays a role in the regulation of the diurnal rhythms of lipid and protein metabolism in the skeletal muscle via transcriptional repression of genes controlling lipid and amino acid metabolism in the muscle. The sequence is that of Nuclear receptor subfamily 1 group D member 1 (NR1D1) from Ovis aries (Sheep).